A 390-amino-acid polypeptide reads, in one-letter code: Protein-glutamate methylesterase/protein-glutamine glutaminase (390 aa).

Positions 4–121 constitute a Response regulatory domain; sequence RALVVDDSGF…SGDMEQVKRQ (118 aa). D55 carries the post-translational modification 4-aspartylphosphate. A disordered region spans residues 130–198; the sequence is GGGRGAPAGR…AAPAPERGQR (69 aa). 2 stretches are compositionally biased toward low complexity: residues 136-148 and 179-193; these read PAGRAPRPAAPVD and EAPVAPTGAPAAPAP. One can recognise a CheB-type methylesterase domain in the interval 201-390; that stretch reads PGALRLVVIG…QVGEELAKLR (190 aa). Catalysis depends on residues S212, H239, and D335.

It belongs to the CheB family. In terms of processing, phosphorylated by CheA. Phosphorylation of the N-terminal regulatory domain activates the methylesterase activity.

The protein resides in the cytoplasm. The enzyme catalyses [protein]-L-glutamate 5-O-methyl ester + H2O = L-glutamyl-[protein] + methanol + H(+). It carries out the reaction L-glutaminyl-[protein] + H2O = L-glutamyl-[protein] + NH4(+). Functionally, involved in chemotaxis. Part of a chemotaxis signal transduction system that modulates chemotaxis in response to various stimuli. Catalyzes the demethylation of specific methylglutamate residues introduced into the chemoreceptors (methyl-accepting chemotaxis proteins or MCP) by CheR. Also mediates the irreversible deamidation of specific glutamine residues to glutamic acid. The protein is Protein-glutamate methylesterase/protein-glutamine glutaminase of Alkalilimnicola ehrlichii (strain ATCC BAA-1101 / DSM 17681 / MLHE-1).